Here is a 339-residue protein sequence, read N- to C-terminus: Phenylalanine--tRNA ligase alpha subunit (339 aa).

Residue Glu-254 participates in Mg(2+) binding.

It belongs to the class-II aminoacyl-tRNA synthetase family. Phe-tRNA synthetase alpha subunit type 1 subfamily. In terms of assembly, tetramer of two alpha and two beta subunits. The cofactor is Mg(2+).

It localises to the cytoplasm. It carries out the reaction tRNA(Phe) + L-phenylalanine + ATP = L-phenylalanyl-tRNA(Phe) + AMP + diphosphate + H(+). The chain is Phenylalanine--tRNA ligase alpha subunit from Clostridium acetobutylicum (strain ATCC 824 / DSM 792 / JCM 1419 / IAM 19013 / LMG 5710 / NBRC 13948 / NRRL B-527 / VKM B-1787 / 2291 / W).